The chain runs to 336 residues: Glucan endo-1,3-beta-glucosidase A (336 aa).

An N-terminal signal peptide occupies residues 1-23; the sequence is MAFLSSLLASLLLVGLLIQITGA. Residue Gln-24 is modified to Pyrrolidone carboxylic acid. The active-site Proton donor is the Glu-118. The active-site Nucleophile is Glu-257.

The protein belongs to the glycosyl hydrolase 17 family.

Its subcellular location is the secreted. It is found in the extracellular space. It carries out the reaction Hydrolysis of (1-&gt;3)-beta-D-glucosidic linkages in (1-&gt;3)-beta-D-glucans.. Its function is as follows. Implicated in the defense of plants against pathogens. The sequence is that of Glucan endo-1,3-beta-glucosidase A from Solanum lycopersicum (Tomato).